The primary structure comprises 173 residues: Shikimate kinase (173 aa).

11 to 16 (GAGKTT) serves as a coordination point for ATP. A Mg(2+)-binding site is contributed by T15. Substrate contacts are provided by D33, R57, and G79. R118 lines the ATP pocket. R140 contributes to the substrate binding site.

The protein belongs to the shikimate kinase family. In terms of assembly, monomer. Mg(2+) is required as a cofactor.

It localises to the cytoplasm. It catalyses the reaction shikimate + ATP = 3-phosphoshikimate + ADP + H(+). Its pathway is metabolic intermediate biosynthesis; chorismate biosynthesis; chorismate from D-erythrose 4-phosphate and phosphoenolpyruvate: step 5/7. Functionally, catalyzes the specific phosphorylation of the 3-hydroxyl group of shikimic acid using ATP as a cosubstrate. The protein is Shikimate kinase of Parabacteroides distasonis (strain ATCC 8503 / DSM 20701 / CIP 104284 / JCM 5825 / NCTC 11152).